The chain runs to 469 residues: Protein RUFY3 (469 aa).

A phosphothreonine mark is found at threonine 5 and threonine 12. Phosphoserine is present on residues serine 34 and serine 49. Residue threonine 51 is modified to Phosphothreonine. The 133-residue stretch at 95 to 227 folds into the RUN domain; sequence DSDYAPLQQF…IDANFCMKGE (133 aa). Coiled coils occupy residues 271–362 and 422–463; these read NRHL…VEKE and KSEL…AANK.

As to quaternary structure, interacts with PAK1. Interacts (via C-terminus) with Ras-related Rab-5 proteins. Interacts (via C-terminus) with Ras-related Rap-2 proteins. Interacts with PIK3CA and PIK3R1. Interacts (via N-terminus) with FSCN1; this interaction induces neuron axon development. Interacts with DBN1. Interacts (via the second coiled coil) with GTP-, but not GDP-bound ARL8A and ARL8B. Interacts with dynactin/DCTN1 and the dynein intermediate chain DYNC1I1/2. Directly interacts with DYNC1LI1. In terms of processing, phosphorylated by PAK1.

It localises to the cytoplasm. The protein resides in the endomembrane system. The protein localises to the cell projection. Its subcellular location is the invadopodium. It is found in the growth cone. It localises to the perikaryon. The protein resides in the filopodium. The protein localises to the lamellipodium. Its subcellular location is the lysosome. Functionally, ARL8 effector that promotes the coupling of endolysosomes to dynein-dynactin for retrograde transport along microtubules. Acts by binding both GTP-bound ARL8 and dynein-dynactin. In nonneuronal cells, promotes concentration of endolysosomes in the juxtanuclear area. In hippocampal neurons, drives retrograde transport of endolysosomes from the axon to the soma. Plays a role in the generation of neuronal polarity formation and axon growth. Implicated in the formation of a single axon by developing neurons. May inhibit the formation of additional axons by inhibition of PI3K in minor neuronal processes. Plays a role in the formation of F-actin-enriched protrusive structures at the cell periphery. Plays a role in cytoskeletal organization by regulating the subcellular localization of FSCN1 and DBN1 at axonal growth cones. In Pongo abelii (Sumatran orangutan), this protein is Protein RUFY3.